The primary structure comprises 49 residues: Large ribosomal subunit protein bL33B (49 aa).

The protein belongs to the bacterial ribosomal protein bL33 family.

In Limosilactobacillus fermentum (strain NBRC 3956 / LMG 18251) (Lactobacillus fermentum), this protein is Large ribosomal subunit protein bL33B.